We begin with the raw amino-acid sequence, 1265 residues long: 1-phosphatidylinositol 4,5-bisphosphate phosphodiesterase gamma-2 (1265 aa).

The PH domain occupies R20–Q131. The region spanning Q312–K456 is the PI-PLC X-box domain. Active-site residues include H327 and H372. 2 SH2 domains span residues W532–V635 and W646–V735. Phosphotyrosine; by BTK occurs at positions 753 and 759. The region spanning M769–A829 is the SH3 domain. The region spanning L930–R1044 is the PI-PLC Y-box domain. The C2 domain occupies L1038 to N1169. The residue at position 1197 (Y1197) is a Phosphotyrosine; by BTK. Phosphotyrosine occurs at positions 1217 and 1245.

As to quaternary structure, part of a complex composed of EEIG1, TNFRSF11A/RANK, PLCG2, GAB2, TEC and BTK; complex formation increases in the presence of TNFSF11/RANKL. Interacts (via SH2 domain) with CSF1R (tyrosine phosphorylated). Interacts constitutively with THEMIS2. It depends on Ca(2+) as a cofactor. Phosphorylated on tyrosine residues by CSF1R. Phosphorylated on tyrosine residues by BTK and SYK; upon ligand-induced activation of a variety of growth factor receptors and immune system receptors. Phosphorylation leads to increased phospholipase activity.

The protein resides in the membrane raft. The catalysed reaction is a 1,2-diacyl-sn-glycero-3-phospho-(1D-myo-inositol-4,5-bisphosphate) + H2O = 1D-myo-inositol 1,4,5-trisphosphate + a 1,2-diacyl-sn-glycerol + H(+). The production of the second messenger molecules diacylglycerol (DAG) and inositol 1,4,5-trisphosphate (IP3) is mediated by activated phosphatidylinositol-specific phospholipase C enzymes. It is a crucial enzyme in transmembrane signaling. This Rattus norvegicus (Rat) protein is 1-phosphatidylinositol 4,5-bisphosphate phosphodiesterase gamma-2.